Consider the following 317-residue polypeptide: Acetyl-coenzyme A carboxylase carboxyl transferase subunit alpha (317 aa).

The CoA carboxyltransferase C-terminal domain maps to 31 to 292 (RFEPELAQLE…DKALWATLTS (262 aa)).

The protein belongs to the AccA family. As to quaternary structure, acetyl-CoA carboxylase is a heterohexamer composed of biotin carboxyl carrier protein (AccB), biotin carboxylase (AccC) and two subunits each of ACCase subunit alpha (AccA) and ACCase subunit beta (AccD).

The protein localises to the cytoplasm. It carries out the reaction N(6)-carboxybiotinyl-L-lysyl-[protein] + acetyl-CoA = N(6)-biotinyl-L-lysyl-[protein] + malonyl-CoA. It functions in the pathway lipid metabolism; malonyl-CoA biosynthesis; malonyl-CoA from acetyl-CoA: step 1/1. Its function is as follows. Component of the acetyl coenzyme A carboxylase (ACC) complex. First, biotin carboxylase catalyzes the carboxylation of biotin on its carrier protein (BCCP) and then the CO(2) group is transferred by the carboxyltransferase to acetyl-CoA to form malonyl-CoA. The chain is Acetyl-coenzyme A carboxylase carboxyl transferase subunit alpha from Sorangium cellulosum (strain So ce56) (Polyangium cellulosum (strain So ce56)).